The following is a 222-amino-acid chain: Deoxyribose-phosphate aldolase (222 aa).

The Proton donor/acceptor role is filled by Asp90. Residue Lys152 is the Schiff-base intermediate with acetaldehyde of the active site. The active-site Proton donor/acceptor is Lys181.

The protein belongs to the DeoC/FbaB aldolase family. DeoC type 1 subfamily.

It localises to the cytoplasm. It carries out the reaction 2-deoxy-D-ribose 5-phosphate = D-glyceraldehyde 3-phosphate + acetaldehyde. The protein operates within carbohydrate degradation; 2-deoxy-D-ribose 1-phosphate degradation; D-glyceraldehyde 3-phosphate and acetaldehyde from 2-deoxy-alpha-D-ribose 1-phosphate: step 2/2. Its function is as follows. Catalyzes a reversible aldol reaction between acetaldehyde and D-glyceraldehyde 3-phosphate to generate 2-deoxy-D-ribose 5-phosphate. This Pectobacterium atrosepticum (strain SCRI 1043 / ATCC BAA-672) (Erwinia carotovora subsp. atroseptica) protein is Deoxyribose-phosphate aldolase.